Consider the following 539-residue polypeptide: Acrosin-binding protein (539 aa).

The signal sequence occupies residues 1-25; it reads MRQLAAGSLLSLLKVLLLPLAPAPA. Residues 26 to 106 are pro-ACR binding; that stretch reads QDANSASTPG…ASWFESFCQF (81 aa). Positions 26–269 are cleaved as a propeptide — removed in active form; that stretch reads QDANSASTPG…NPFSFTPRVR (244 aa). The interval 186–259 is disordered; it reads LGGQEQGQEH…PKFQSEFVSS (74 aa). Residues 192–211 show a composition bias toward basic and acidic residues; it reads GQEHKQEHKQEQGQEHKQDE. Positions 212–238 are enriched in acidic residues; it reads GQEQEEQEEEQEEEGKQEEGQGTEESL. The pro-ACR binding stretch occupies residues 315 to 423; it reads LPHVDALLVL…TQIGTLKSGR (109 aa).

In terms of assembly, binds specifically to the 55- and 53-kDa proacrosins and the 49-kDa acrosin intermediate, but is not capable of binding 43-kDa acrosin intermediate and 32-kDa mature acrosin. In terms of processing, the N-terminus is blocked. Post-translationally, synthesized as a 60-kDa precursor, the 35-kDa mature form is post-translationally produced by the removal of the N-terminal half of the precursor during sperm maturation in the testis and/or epididymis. Phosphorylated on Tyr residues in capacitated sperm. In terms of tissue distribution, specifically expressed in testis.

Its subcellular location is the secreted. The protein localises to the cytoplasmic vesicle. It is found in the secretory vesicle. It localises to the acrosome. In terms of biological role, acrosomal protein that maintains proacrosin (pro-ACR) as an enzymatically inactive zymogen in the acrosome. Involved also in the acrosome formation. This chain is Acrosin-binding protein, found in Sus scrofa (Pig).